The sequence spans 310 residues: HTH-type transcriptional activator TtdR (310 aa).

An HTH lysR-type domain is found at 6 to 63 (PLAKDLQVLVEIVHSGSFSAAAATLGQTPAFVTKRIQILENTLATTLLNRSARGVALT). A DNA-binding region (H-T-H motif) is located at residues 23 to 42 (FSAAAATLGQTPAFVTKRIQ).

Belongs to the LysR transcriptional regulatory family.

Positive regulator required for L-tartrate-dependent anaerobic growth on glycerol. Induces expression of the ttdA-ttdB-ygjE operon. This is HTH-type transcriptional activator TtdR (ttdR) from Escherichia coli O6:H1 (strain CFT073 / ATCC 700928 / UPEC).